A 636-amino-acid polypeptide reads, in one-letter code: MIALRQAAYFICLFATVSCGCLTQLYHNIFFRGGDVSAMYTPDAQYCQLMCTFHPRCLLFSFLPENSTSDADKRFGCFLKDSVTGTLPRVSRTGAISGHSLKRCGHQISACHRSIYKGIDMRGVNFNASKVRSAKECQERCTNNIHCQFFTYATKTFFSAEYRNTCLLKRSPQGTPTRIKVLSDVESGFSLKACGNSKIGCRVDIFQHSAFSDVDVAGIIAPDAFVCRTICTYHPSCLFFTFYTNAWKTDSQRNVCFLKTSQSGSPSSPTPQENAISGYSLLTCKQTLPGTEPCHSKIYPQVAFEGEELHVTFVKGVDGCQETCTKMIRCQFFTYSLFPEDCRGEKCKCSLRLSLDGSPTNITYGTQASSGYSLRLCKRGDSRVCTTKRTRIVGGTNASWGEWPWQVSLQVKQRAQSHLCGGSIIGRQWVLTAAHCFDGLLLSNIWRIYGGILNLSEITTETSFSQIKEIIVHPNYKISEGSHDIALIKLEAPLNFTDLQKAICLPSKDDTKPVYTDCWITGWGFTEEKGKIQNTLQKANIPLISNEECQKSYRDYKITKQMICAGYKEGGKDACKGDSGGPLVCQHEETWHLVGITSWGEGCARREQPGVYTKVAEYVDWILEKTQDSHGQPLRK.

A signal peptide spans 1–19 (MIALRQAAYFICLFATVSC). Apple domains lie at 21–104 (CLTQ…LKRC), 111–194 (CHRS…LKAC), 201–284 (CRVD…LLTC), and 294–377 (CHSK…LRLC). 12 disulfide bridges follow: Cys21/Cys104, Cys47/Cys77, Cys51/Cys57, Cys111/Cys194, Cys137/Cys166, Cys141/Cys147, Cys201/Cys284, Cys227/Cys256, Cys231/Cys237, Cys294/Cys377, Cys320/Cys349, and Cys324/Cys330. Asn66 and Asn127 each carry an N-linked (GlcNAc...) asparagine glycan. N-linked (GlcNAc...) asparagine glycosylation is found at Asn361 and Asn397. The 236-residue stretch at 392–627 (IVGGTNASWG…YVDWILEKTQ (236 aa)) folds into the Peptidase S1 domain. A disulfide bridge connects residues Cys420 and Cys436. His435 (charge relay system) is an active-site residue. Asn454 is a glycosylation site (N-linked (GlcNAc...) asparagine). Residue Asp484 is the Charge relay system of the active site. Asn495 carries an N-linked (GlcNAc...) asparagine glycan. 3 cysteine pairs are disulfide-bonded: Cys518–Cys585, Cys549–Cys564, and Cys575–Cys603. Ser579 serves as the catalytic Charge relay system.

It belongs to the peptidase S1 family. Plasma kallikrein subfamily. In terms of assembly, forms a heterodimer with SERPINA5. The zymogen is activated by factor XIIa, which cleaves the molecule into a light chain, which contains the active site, and a heavy chain, which associates with HMW kininogen. These chains are linked by one or more disulfide bonds.

It is found in the secreted. The enzyme catalyses Cleaves selectively Arg-|-Xaa and Lys-|-Xaa bonds, including Lys-|-Arg and Arg-|-Ser bonds in (human) kininogen to release bradykinin.. Its activity is regulated as follows. Inhibited by SERPINA5. Its function is as follows. The enzyme cleaves Lys-Arg and Arg-Ser bonds. It activates, in a reciprocal reaction, factor XII after its binding to a negatively charged surface. It also releases bradykinin from HMW kininogen and may also play a role in the renin-angiotensin system by converting prorenin into renin. In Bos taurus (Bovine), this protein is Plasma kallikrein (KLKB1).